The primary structure comprises 134 residues: Small ribosomal subunit protein bS6 (134 aa).

Belongs to the bacterial ribosomal protein bS6 family.

Functionally, binds together with bS18 to 16S ribosomal RNA. This is Small ribosomal subunit protein bS6 from Chlorobium phaeobacteroides (strain BS1).